The following is a 167-amino-acid chain: Phosphopantetheine adenylyltransferase (167 aa).

Ser-11 serves as a coordination point for substrate. Residues 11–12 (SF) and His-19 contribute to the ATP site. Substrate is bound by residues Lys-43, Thr-76, and Arg-90. ATP contacts are provided by residues 91–93 (GIR), Glu-101, and 126–132 (YDALSST).

Belongs to the bacterial CoaD family. In terms of assembly, homohexamer. Mg(2+) is required as a cofactor.

The protein resides in the cytoplasm. It catalyses the reaction (R)-4'-phosphopantetheine + ATP + H(+) = 3'-dephospho-CoA + diphosphate. The protein operates within cofactor biosynthesis; coenzyme A biosynthesis; CoA from (R)-pantothenate: step 4/5. In terms of biological role, reversibly transfers an adenylyl group from ATP to 4'-phosphopantetheine, yielding dephospho-CoA (dPCoA) and pyrophosphate. This Lacticaseibacillus casei (strain BL23) (Lactobacillus casei) protein is Phosphopantetheine adenylyltransferase.